Consider the following 267-residue polypeptide: Integral membrane protein 2C (267 aa).

Phosphothreonine is present on T37. Residues 55-75 (VGGVCYLSMGMVVLLMGLVFA) form a helical; Signal-anchor for type II membrane protein membrane-spanning segment. The region spanning 136 to 230 (FGGGDPADII…LCNGKDTYRL (95 aa)) is the BRICHOS domain. Residues C163 and C222 are joined by a disulfide bond. The N-linked (GlcNAc...) asparagine glycan is linked to N169.

The protein belongs to the ITM2 family. Interacts with BACE1. Interacts with APP. Interacts with STMN2. Post-translationally, type I membrane-bound, as well as soluble, furin has a pre-eminent role in ITM2C proteolytic processing. PCSK7 and PCSK5 may also be involved although to a lesser extent. The soluble form of PCSK7 is incapable of processing ITM2C. Fails to undergo shedding by ADAM10 and intramembrane cleavage by SPPL2B. High levels in the brain, specifically in the cerebral cortex, medulla, amygdala, hippocampus, thalamus, caudate nucleus, cerebellum, olfactory lobe and spinal cord. Very low levels in other organs.

It localises to the lysosome membrane. The protein resides in the cell membrane. Its function is as follows. Negative regulator of amyloid-beta peptide production. May inhibit the processing of APP by blocking its access to alpha- and beta-secretase. Binding to the beta-secretase-cleaved APP C-terminal fragment is negligible, suggesting that ITM2C is a poor gamma-secretase cleavage inhibitor. May play a role in TNF-induced cell death and neuronal differentiation. The polypeptide is Integral membrane protein 2C (ITM2C) (Homo sapiens (Human)).